Consider the following 1349-residue polypeptide: Serine/threonine-protein kinase GIN4 (1349 aa).

Over residues Met1–Asn20 the composition is skewed to low complexity. The segment at Met1–Leu30 is disordered. Phosphoserine is present on residues Ser10, Ser11, Ser12, and Ser15. Positions Trp28–Leu288 constitute a Protein kinase domain. ATP-binding positions include Leu34–Val42 and Lys57. Thr69 carries the post-translational modification Phosphothreonine. The active-site Proton acceptor is the Asp158. Position 191 is a phosphothreonine (Thr191). Residues Ser294, Ser300, and Ser303 each carry the phosphoserine modification. Disordered regions lie at residues Gln366–Pro498 and Ser510–Asp532. Residues Asn369 to Lys384 show a composition bias toward low complexity. Ser388, Ser390, and Ser393 each carry phosphoserine. Thr397 carries the phosphothreonine modification. Composition is skewed to polar residues over residues Ile406 to Ser418 and Ala426 to Asn442. A phosphoserine mark is found at Ser407 and Ser409. Position 412 is a phosphothreonine (Thr412). Ser413 bears the Phosphoserine mark. The span at Ser443–Tyr470 shows a compositional bias: low complexity. A phosphoserine mark is found at Ser455, Ser469, Ser473, Ser477, and Ser485. The span at Asn471–Gln488 shows a compositional bias: polar residues. Ser556 is subject to Phosphoserine. Positions Arg570–Lys585 are enriched in low complexity. The interval Arg570–Ile593 is disordered. Ser634 bears the Phosphoserine mark. Positions Glu661 to Ile701 form a coiled coil. Positions Lys712–Lys737 are disordered. Phosphoserine occurs at positions 720 and 746. Residues Thr756 to Asn798 form a disordered region. Residues Thr778, Thr869, and Thr876 each carry the phosphothreonine modification. Phosphoserine is present on Ser891. Position 941 is a phosphothreonine (Thr941). Ser973 bears the Phosphoserine mark. A phosphothreonine mark is found at Thr990 and Thr992. At Ser999 the chain carries Phosphoserine. The interval Arg1011–Ser1229 is disordered. Residues Arg1024–Arg1040 are compositionally biased toward polar residues. The segment covering Lys1044 to Tyr1053 has biased composition (basic and acidic residues). Phosphothreonine is present on Thr1056. Residues Ser1059, Ser1074, Ser1077, Ser1078, Ser1080, and Ser1094 each carry the phosphoserine modification. Residues Val1083–Ser1094 show a composition bias toward basic and acidic residues. Thr1095 is subject to Phosphothreonine. A phosphoserine mark is found at Ser1097 and Ser1098. Thr1106 is subject to Phosphothreonine. Residues Ile1134–Ser1149 are compositionally biased toward polar residues. Position 1154 is a phosphoserine (Ser1154). Low complexity predominate over residues Asn1202 to Gln1215. At Ser1218 the chain carries Phosphoserine.

The protein belongs to the protein kinase superfamily. CAMK Ser/Thr protein kinase family. NIM1 subfamily. As to quaternary structure, associates with the septin complex which consists of CDC3, CDC10, CDC11, CDC12, and SEP7. In terms of processing, hyperphosphorylated during mitosis at dozens of sites. Among these, 7 have perfect or minimal CDK consensus sites and are CDC28 targets.

The protein resides in the cytoplasm. The protein localises to the bud neck. The catalysed reaction is L-seryl-[protein] + ATP = O-phospho-L-seryl-[protein] + ADP + H(+). It carries out the reaction L-threonyl-[protein] + ATP = O-phospho-L-threonyl-[protein] + ADP + H(+). In terms of biological role, serine/threonine-protein kinase which regulates the localization and the function of the septins during mitosis. Involved in the formation of the septin ring but not the basal septin band. Phosphorylates septins CDC11 and SEP7. Required for the transition from pseudohyphae to hyphae. Acts upstream of IRS4 and INP51 in regulating cell wall integrity responses. Involved in propolis-induced cell death. This is Serine/threonine-protein kinase GIN4 (GIN4) from Candida albicans (strain SC5314 / ATCC MYA-2876) (Yeast).